The sequence spans 354 residues: Homer protein homolog 2 (354 aa).

One can recognise a WH1 domain in the interval 1 to 110 (MGEQPIFTTR…EKFQEVKEAA (110 aa)). Residues 92 to 122 (SEQQLTKFAEKFQEVKEAAKIAKDKTQEKIE) are a coiled coil. Residues 112–122 (IAKDKTQEKIE) show a composition bias toward basic and acidic residues. Residues 112–166 (IAKDKTQEKIETSSNHSQESGRETPSSTQASSVNGTDDEKASHAGPANTHLKSEN) form a disordered region. Positions 123–146 (TSSNHSQESGRETPSSTQASSVNG) are enriched in polar residues. Residues 160–329 (THLKSENDKL…RHLKVELKSF (170 aa)) adopt a coiled-coil conformation.

This sequence belongs to the Homer family. In terms of assembly, forms coiled-coil structures that mediate homo- and heteromultimerization. Interacts with NFATC2; interaction is reduced by AKT activation. Interacts with NFATC1 and NFATC4. Interacts with DAGLA (via PPXXF motif); this interaction is required for the cell membrane localization of DAGLA.

It localises to the cytoplasm. Its subcellular location is the cell membrane. The protein resides in the postsynaptic density. It is found in the synapse. The protein localises to the cell projection. It localises to the stereocilium. Postsynaptic density scaffolding protein. Binds and cross-links cytoplasmic regions of GRM1, GRM5, ITPR1, DNM3, RYR1, RYR2, SHANK1 and SHANK3. By physically linking GRM1 and GRM5 with ER-associated ITPR1 receptors, it aids the coupling of surface receptors to intracellular calcium release. May also couple GRM1 to PI3 kinase through its interaction with AGAP2. Isoforms can be differently regulated and may play an important role in maintaining the plasticity at glutamatergic synapses. Required for normal hearing. Negatively regulates T cell activation by inhibiting the calcineurin-NFAT pathway. Acts by competing with calcineurin/PPP3CA for NFAT protein binding, hence preventing NFAT activation by PPP3CA. In Homo sapiens (Human), this protein is Homer protein homolog 2.